The primary structure comprises 252 residues: 3-dehydroquinate dehydratase (252 aa).

3-dehydroquinate is bound by residues serine 21, 46 to 48 (EWR), and arginine 82. Histidine 143 acts as the Proton donor/acceptor in catalysis. Lysine 170 acts as the Schiff-base intermediate with substrate in catalysis. 3-dehydroquinate-binding residues include arginine 213, serine 232, and glutamine 236.

This sequence belongs to the type-I 3-dehydroquinase family. In terms of assembly, homodimer.

It catalyses the reaction 3-dehydroquinate = 3-dehydroshikimate + H2O. It functions in the pathway metabolic intermediate biosynthesis; chorismate biosynthesis; chorismate from D-erythrose 4-phosphate and phosphoenolpyruvate: step 3/7. Involved in the third step of the chorismate pathway, which leads to the biosynthesis of aromatic amino acids. Catalyzes the cis-dehydration of 3-dehydroquinate (DHQ) and introduces the first double bond of the aromatic ring to yield 3-dehydroshikimate. This chain is 3-dehydroquinate dehydratase, found in Salmonella dublin (strain CT_02021853).